The sequence spans 276 residues: Dermonecrotic toxin LlSicTox-alphaIV1i (276 aa).

Histidine 5 is a catalytic residue. Mg(2+) contacts are provided by glutamate 25 and aspartate 27. The active-site Nucleophile is histidine 41. Cystine bridges form between cysteine 45–cysteine 51 and cysteine 47–cysteine 193. Residue aspartate 85 participates in Mg(2+) binding.

This sequence belongs to the arthropod phospholipase D family. Class II subfamily. The cofactor is Mg(2+). As to expression, expressed by the venom gland.

The protein resides in the secreted. It catalyses the reaction an N-(acyl)-sphingosylphosphocholine = an N-(acyl)-sphingosyl-1,3-cyclic phosphate + choline. It carries out the reaction an N-(acyl)-sphingosylphosphoethanolamine = an N-(acyl)-sphingosyl-1,3-cyclic phosphate + ethanolamine. The catalysed reaction is a 1-acyl-sn-glycero-3-phosphocholine = a 1-acyl-sn-glycero-2,3-cyclic phosphate + choline. The enzyme catalyses a 1-acyl-sn-glycero-3-phosphoethanolamine = a 1-acyl-sn-glycero-2,3-cyclic phosphate + ethanolamine. Dermonecrotic toxins cleave the phosphodiester linkage between the phosphate and headgroup of certain phospholipids (sphingolipid and lysolipid substrates), forming an alcohol (often choline) and a cyclic phosphate. This toxin acts on sphingomyelin (SM). It may also act on ceramide phosphoethanolamine (CPE), lysophosphatidylcholine (LPC) and lysophosphatidylethanolamine (LPE), but not on lysophosphatidylserine (LPS), and lysophosphatidylglycerol (LPG). It acts by transphosphatidylation, releasing exclusively cyclic phosphate products as second products. Induces dermonecrosis, hemolysis, increased vascular permeability, edema, inflammatory response, and platelet aggregation. The sequence is that of Dermonecrotic toxin LlSicTox-alphaIV1i from Loxosceles laeta (South American recluse spider).